A 168-amino-acid polypeptide reads, in one-letter code: ATP synthase subunit b (168 aa).

A helical transmembrane segment spans residues 10-30 (STILGNFILVTASFAVLIILI).

The protein belongs to the ATPase B chain family. As to quaternary structure, F-type ATPases have 2 components, F(1) - the catalytic core - and F(0) - the membrane proton channel. F(1) has five subunits: alpha(3), beta(3), gamma(1), delta(1), epsilon(1). F(0) has three main subunits: a(1), b(2) and c(10-14). The alpha and beta chains form an alternating ring which encloses part of the gamma chain. F(1) is attached to F(0) by a central stalk formed by the gamma and epsilon chains, while a peripheral stalk is formed by the delta and b chains.

It is found in the cell membrane. F(1)F(0) ATP synthase produces ATP from ADP in the presence of a proton or sodium gradient. F-type ATPases consist of two structural domains, F(1) containing the extramembraneous catalytic core and F(0) containing the membrane proton channel, linked together by a central stalk and a peripheral stalk. During catalysis, ATP synthesis in the catalytic domain of F(1) is coupled via a rotary mechanism of the central stalk subunits to proton translocation. Functionally, component of the F(0) channel, it forms part of the peripheral stalk, linking F(1) to F(0). The sequence is that of ATP synthase subunit b from Streptococcus suis (strain 98HAH33).